Consider the following 597-residue polypeptide: MSLAFNLRAIPFSGHTIQSRRGLFPVHESPMITTKPFVAVKCSLTTSTDLMGKIKDKFNGKVHTSLPAITTHSADTPCNLCIIDTLQRLGVDRYFQSEIDSILDDTYRLWQLKKEDIFSDITTHAMAFRLLRVKGYQVSSEELAPYADQERVNLQEIDVPTVIELYRAAQERVTEEDSTLKKLYVWTSTFLKQQLLTDAIPDKKLHEQVDYYLKNYHGILDRMGVRRSLDLYDVGHYKTLKAADGFSNLCNEDLLAFAMQDFNISQAQHQKELQQLQRWYSDCRLDTLKFGRDVVRVSNFLTSAMSGDPELSDVRLAFAKHIVLVTRIDDFFDHGGSKEESYKILELVKEWKEKPAGEYGSEEIEILFTAVYNTVNELAEMAHIEQGRSVKDLLIKLWVEILSIFKIELDTWSDDTALTLDEYLSSSWVSIGCRICILISMQFLGVKLTDEMLLSEECTDLCRHVSMVDRLLNDVQTFEKERKENTGNSVSLLLAAHKDERAINEEEAITKAKDLAEYNRRKLMQIVYKTGTIFPRKCKDMFLKVCRIGCYLYSSGDEFTTPQQMMEDMKSLVYEPLTIHPPEANNVVGRKQSCVSN.

The N-terminal 51 residues, 1 to 51 (MSLAFNLRAIPFSGHTIQSRRGLFPVHESPMITTKPFVAVKCSLTTSTDLM), are a transit peptide targeting the chloroplast. Positions 329, 333, 473, and 481 each coordinate Mg(2+). The DDXXD motif motif lies at 329–333 (DDFFD).

The protein belongs to the terpene synthase family. The cofactor is Mg(2+).

The protein resides in the plastid. The protein localises to the chloroplast. It catalyses the reaction (+)-copalyl diphosphate = miltiradiene + diphosphate. It participates in secondary metabolite biosynthesis; terpenoid biosynthesis. Its function is as follows. Involved in the biosynthesis of ent-kaurene diterpenoids natural products such as oridonin, miltiradiene, eriocalyxin B and nezukol, known to exhibit antitumor, anti-inflammatory and antibacterial activities. Catalyzes the conversion of (+)-copalyl diphosphate ((+)-CPP) to miltiradiene. This is Miltiradiene synthase KSL2, chloroplastic from Isodon japonicus (Scutellaria japonica).